Here is a 377-residue protein sequence, read N- to C-terminus: Protein-tyrosine sulfotransferase 2 (377 aa).

The Cytoplasmic portion of the chain corresponds to 1–8; that stretch reads MRLSVRRV. Residues 9 to 25 traverse the membrane as a helical; Signal-anchor for type II membrane protein segment; the sequence is LLAAGCALVLVLAVQLG. Residues 26 to 377 are Lumenal-facing; that stretch reads QQVLECRAVL…NSTSSHLGSS (352 aa). 78–82 provides a ligand contact to 3'-phosphoadenylyl sulfate; that stretch reads RSGTT. Cys-96 and Cys-156 are disulfide-bonded. Catalysis depends on Glu-99, which acts as the Proton donor/acceptor. Residues 101–105 form an interaction with peptide substrate region; that stretch reads RIIPR. Residues Arg-183, Ser-191, and Arg-195 each coordinate 3'-phosphoadenylyl sulfate. A disulfide bridge connects residues Cys-225 and Cys-233. 3'-phosphoadenylyl sulfate is bound by residues Tyr-238, 285 to 294, and Lys-300; that span reads STDQVIKPVN. N-linked (GlcNAc...) asparagine glycans are attached at residues Asn-343 and Asn-368.

It belongs to the protein sulfotransferase family. In terms of assembly, homodimer. Can also form heterodimers with TPST1. In terms of processing, N-glycosylated. As to expression, widely expressed.

It localises to the golgi apparatus membrane. The catalysed reaction is L-tyrosyl-[protein] + 3'-phosphoadenylyl sulfate = O-sulfo-L-tyrosine-[protein] + adenosine 3',5'-bisphosphate + H(+). Functionally, catalyzes the O-sulfation of tyrosine residues within acidic motifs of polypeptides, using 3'-phosphoadenylyl sulfate (PAPS) as cosubstrate. This Homo sapiens (Human) protein is Protein-tyrosine sulfotransferase 2 (TPST2).